The primary structure comprises 256 residues: Proteasome subunit alpha (256 aa).

The tract at residues 235-256 is disordered; it reads ELDSNGSDGNGDAPELNGGSSD.

It belongs to the peptidase T1A family. The 20S proteasome core is composed of 14 alpha and 14 beta subunits that assemble into four stacked heptameric rings, resulting in a barrel-shaped structure. The two inner rings, each composed of seven catalytic beta subunits, are sandwiched by two outer rings, each composed of seven alpha subunits. The catalytic chamber with the active sites is on the inside of the barrel. Has a gated structure, the ends of the cylinder being occluded by the N-termini of the alpha-subunits. Is capped by the proteasome-associated ATPase, ARC.

It localises to the cytoplasm. Its pathway is protein degradation; proteasomal Pup-dependent pathway. The formation of the proteasomal ATPase ARC-20S proteasome complex, likely via the docking of the C-termini of ARC into the intersubunit pockets in the alpha-rings, may trigger opening of the gate for substrate entry. Interconversion between the open-gate and close-gate conformations leads to a dynamic regulation of the 20S proteasome proteolysis activity. In terms of biological role, component of the proteasome core, a large protease complex with broad specificity involved in protein degradation. The chain is Proteasome subunit alpha from Mycolicibacterium paratuberculosis (strain ATCC BAA-968 / K-10) (Mycobacterium paratuberculosis).